A 164-amino-acid polypeptide reads, in one-letter code: Respiratory growth induced protein 2 (164 aa).

It belongs to the RGI1 family.

It localises to the cytoplasm. In terms of biological role, involved in the control of energetic metabolism and significantly contribute to cell fitness, especially under respiratory growth conditions. The polypeptide is Respiratory growth induced protein 2 (RGI2) (Candida glabrata (strain ATCC 2001 / BCRC 20586 / JCM 3761 / NBRC 0622 / NRRL Y-65 / CBS 138) (Yeast)).